A 995-amino-acid polypeptide reads, in one-letter code: UPF0182 protein NFA_45260 (995 aa).

A run of 7 helical transmembrane segments spans residues 18 to 38 (VLLV…RFTD), 63 to 83 (IILF…ALLL), 115 to 135 (FGIG…QSNW), 176 to 196 (FVAV…FGGL), 211 to 231 (IQLA…YWFD), 260 to 280 (KLIL…GVVL), and 288 to 308 (MAAA…PLVV). The segment at 904-957 (ATPFGGDPATRPQPGTAPPVVDSTQPPADGGTPQPQTTPPPTGSAAKDAAAAEL) is disordered. 2 stretches are compositionally biased toward low complexity: residues 927–938 (TQPPADGGTPQP) and 946–955 (GSAAKDAAAA).

It belongs to the UPF0182 family.

The protein localises to the cell membrane. The protein is UPF0182 protein NFA_45260 of Nocardia farcinica (strain IFM 10152).